Consider the following 483-residue polypeptide: Glutamate--tRNA ligase (483 aa).

Residues 9 to 19 carry the 'HIGH' region motif; sequence PSPTGYLHIGN. The short motif at 250–254 is the 'KMSKS' region element; it reads KLSKR. Lys-253 provides a ligand contact to ATP.

Belongs to the class-I aminoacyl-tRNA synthetase family. Glutamate--tRNA ligase type 1 subfamily. In terms of assembly, monomer.

The protein resides in the cytoplasm. The enzyme catalyses tRNA(Glu) + L-glutamate + ATP = L-glutamyl-tRNA(Glu) + AMP + diphosphate. Catalyzes the attachment of glutamate to tRNA(Glu) in a two-step reaction: glutamate is first activated by ATP to form Glu-AMP and then transferred to the acceptor end of tRNA(Glu). The chain is Glutamate--tRNA ligase from Blochmanniella floridana.